A 640-amino-acid polypeptide reads, in one-letter code: Probable potassium transport system protein Kup 1 (640 aa).

Helical transmembrane passes span 24–44, 67–87, 116–136, 154–174, 186–206, 222–242, 264–284, 296–316, 354–374, 382–402, 411–431, and 436–456; these read LGALSLAAIGVVYGDIGTSPL, IASLVFWAIILVVTIKYVLFV, VGPLVGLGLFGAALFIGDGMI, PFFAPYVVPLTLIVLVALFTI, FGPVMVVWFLTIAALGLTEVV, TFLFTHGWIAFVVMGSVVLAV, WFALVLPALTLNYFGQAALIL, MLVPGWGLYPMVILATLATVI, IYIPRANWGLLLGIVALVVGF, AAYGIAVTGTMAATTILALVV, LWLCLGLGAVFLAVDLGFLGA, and VTQGGWFPLAVGLGMLLLMAT.

It belongs to the HAK/KUP transporter (TC 2.A.72) family.

The protein resides in the cell inner membrane. It catalyses the reaction K(+)(in) + H(+)(in) = K(+)(out) + H(+)(out). In terms of biological role, transport of potassium into the cell. Likely operates as a K(+):H(+) symporter. In Paramagnetospirillum magneticum (strain ATCC 700264 / AMB-1) (Magnetospirillum magneticum), this protein is Probable potassium transport system protein Kup 1.